An 85-amino-acid polypeptide reads, in one-letter code: Protein C4 (85 aa).

Residue G2 is the site of N-myristoyl glycine; by host attachment. The tract at residues 42-65 (LNPAPTSSPTSTRTETQLNGGNSR) is disordered. A compositionally biased stretch (low complexity) spans 44–57 (PAPTSSPTSTRTET).

It belongs to the geminiviridae protein AC4/C4 family. Interacts with Arabidopsis thaliana RCH2, ASK7/ASK-eta and ASK6/ASK-zeta. Post-translationally, phosphorylated by Arabidopsis thaliana ASK7/ASK-eta mainly on threonine and serine residues. In terms of tissue distribution, expressed in vascular tissues, and especially in phloem cells.

It is found in the host cell membrane. Its function is as follows. Major determinant of pathogenesis that affects the hyperplastic response of the host to viral infection. Mediates the induction of cell division in permissive cells, mainly in phloem. May act as a suppressor of RNA-mediated gene silencing, also known as post-transcriptional gene silencing (PTGS), a mechanism of plant viral defense that limits the accumulation of viral RNAs. The protein is Protein C4 of Beet curly top virus (strain California/Logan) (BCTV).